The primary structure comprises 204 residues: Somatotropin (204 aa).

The first 17 residues, 1–17 (MDRAILLLSVLSVGVSS), serve as a signal peptide directing secretion. Q18 bears the Pyrrolidone carboxylic acid mark. A Zn(2+)-binding site is contributed by H35. Residues C69 and C177 are joined by a disulfide bond. E186 is a binding site for Zn(2+). A disulfide bridge connects residues C194 and C202.

Belongs to the somatotropin/prolactin family.

It is found in the secreted. Functionally, growth hormone plays an important role in growth control and is involved in the regulation of several anabolic processes. Implicated as an osmoregulatory substance important for seawater adaptation. The polypeptide is Somatotropin (gh) (Dicentrarchus labrax (European seabass)).